Consider the following 352-residue polypeptide: Peptide chain release factor 1 (352 aa).

Gln233 carries the N5-methylglutamine modification. Residues Asn288–Asn309 are disordered. The span at Ala289–Arg306 shows a compositional bias: basic and acidic residues.

This sequence belongs to the prokaryotic/mitochondrial release factor family. In terms of processing, methylated by PrmC. Methylation increases the termination efficiency of RF1.

The protein localises to the cytoplasm. Its function is as follows. Peptide chain release factor 1 directs the termination of translation in response to the peptide chain termination codons UAG and UAA. The polypeptide is Peptide chain release factor 1 (prfA) (Helicobacter pylori (strain J99 / ATCC 700824) (Campylobacter pylori J99)).